A 540-amino-acid polypeptide reads, in one-letter code: Anti-sigma-I factor RsgI7 (540 aa).

Residues 1–48 (MRAMVVDMNDKYAVVVNKEGQYIKIKRKAEHRLGYQVELPDRVIGFER) enclose the RsgI N-terminal anti-sigma domain. Residues 1–50 (MRAMVVDMNDKYAVVVNKEGQYIKIKRKAEHRLGYQVELPDRVIGFERRT) are Cytoplasmic-facing. A helical membrane pass occupies residues 51 to 73 (LLKVVSVAAALLIVSSISFAVYS). The Extracellular segment spans residues 74 to 540 (YNLPYSYVNV…PGKEILKKRC (467 aa)). Composition is skewed to basic and acidic residues over residues 238 to 256 (DIKK…KKVN), 319 to 329 (SGIDKGNKDSK), 338 to 351 (NDVK…KTNS), 359 to 370 (VSKDNKNDKADG), and 398 to 419 (SKDD…EDNK). Disordered regions lie at residues 238–429 (DIKK…CPQY) and 481–540 (QEEQ…KKRC). Residues 451–501 (KEDMTKQNDEWFKKMQEEQKKQYDEWLKKMQEEQKKQHDEWVKKMEEMKNT) are a coiled coil.

Interacts (via RsgI N-terminal anti-sigma domain) with SigI7.

It localises to the cell membrane. Its function is as follows. Anti-sigma factor for SigI7. Negatively regulates SigI7 activity through direct interaction. This Acetivibrio thermocellus (strain ATCC 27405 / DSM 1237 / JCM 9322 / NBRC 103400 / NCIMB 10682 / NRRL B-4536 / VPI 7372) (Clostridium thermocellum) protein is Anti-sigma-I factor RsgI7.